The sequence spans 184 residues: Gastrokine-1 (184 aa).

The N-terminal stretch at 1–20 is a signal peptide; that stretch reads MKLTMFVVGLLGLLAAPGFA. A BRICHOS domain is found at 54-148; that stretch reads NNGWDSWNSL…MCRGIPTYVA (95 aa). A disulfide bond links C81 and C140.

It belongs to the gastrokine family. Expressed in the stomach. Highly expressed specifically in surface cells of the antrum mucosa from where it is secreted.

The protein localises to the secreted. The protein resides in the cytoplasmic granule. Its subcellular location is the golgi apparatus. In terms of biological role, has mitogenic activity and may be involved in maintaining the integrity of the gastric mucosal epithelium. This Mus musculus (Mouse) protein is Gastrokine-1 (Gkn1).